The chain runs to 534 residues: Corneodesmosin (534 aa).

The signal sequence occupies residues 1 to 32 (MGLSRAPWMGRVGGRGMMALLLAGLLLPGTLA). Disordered stretches follow at residues 38–252 (FSDP…HSVS) and 396–497 (CSPF…GSAG). Low complexity-rich tracts occupy residues 64-82 (GFSSYSGSSGSGSSISSAS), 107-185 (GYSQ…SGSA), 200-236 (SQLGQSSSFSQTSGQRVSSNQRPCSSDIPDSPCSGGP), 397-415 (SPFSSRVHSSSSISSSSGS), and 431-446 (PGTGSFSSSSSSQSSG). Over residues 454–472 (GSKSSSSGHPCMSVSSLTL) the composition is skewed to polar residues.

The protein resides in the secreted. Its function is as follows. Important for the epidermal barrier integrity. This is Corneodesmosin (CDSN) from Macaca mulatta (Rhesus macaque).